Consider the following 285-residue polypeptide: MATARQGENTISPEAIPSNLPSRPTVLVFDSGVGGLSVYDEIRQLLPDLHYIYAFDNEAFPYGEKSQQFIIERVVEIVNAVQLRHQLALVVIACNTASTISLPALRERFTFPVVGVVPAVKPAAKLTRNGVVGLLATRATVQRPYTHELIARFATDCQILSLGSSELVELAEAKLQGETISISELQKILRPWLRLPEPPDTVVLGCTHFPLLAEELKAALPDGTRLVDSGAAIARRTAWLIANLDNPPLSTDKNLVYCLAITPKVATLWPILQRYGFDSLEKLPL.

Substrate-binding positions include 30–31 and 62–63; these read DS and YG. Catalysis depends on cysteine 94, which acts as the Proton donor/acceptor. 95-96 is a binding site for substrate; that stretch reads NT. Residue cysteine 206 is the Proton donor/acceptor of the active site. Position 207-208 (207-208) interacts with substrate; that stretch reads TH.

The protein belongs to the aspartate/glutamate racemases family.

The enzyme catalyses L-glutamate = D-glutamate. It participates in cell wall biogenesis; peptidoglycan biosynthesis. Provides the (R)-glutamate required for cell wall biosynthesis. This Pectobacterium carotovorum subsp. carotovorum (strain PC1) protein is Glutamate racemase.